A 129-amino-acid chain; its full sequence is Small ribosomal subunit protein uS11 (129 aa).

Positions 109-129 are disordered; the sequence is VDDTPVPHNGCRPKKKFRKAS. The segment covering 119-129 has biased composition (basic residues); the sequence is CRPKKKFRKAS.

This sequence belongs to the universal ribosomal protein uS11 family. As to quaternary structure, part of the 30S ribosomal subunit. Interacts with proteins S7 and S18. Binds to the C-terminus of IF-3; however exactly how IF-3 interacts with the 30S subunit is unclear.

In terms of biological role, located on the upper part of the platform of the 30S subunit, where it bridges several disparate RNA helices of the 16S rRNA. Forms part of the Shine-Dalgarno cleft in the 70S ribosome. The chain is Small ribosomal subunit protein uS11 (rpsK) from Thermus thermophilus (strain ATCC BAA-163 / DSM 7039 / HB27).